A 205-amino-acid chain; its full sequence is MVPCGAVLWRRLLRKRWVLGVVFGLSLVYFLSSTFKQEERTVRDRNLLQVQEHEQPILWKEQFSSGNGSHLSNQCRNSVQGKLLITDELGYICERKDLLVNGCCNVNVPSTKLYSCDSCLPNGCCSVYEYCVSCCLQPSKQHLLERFLNRAAMAFQNLFMAVEDRFELCLAKCRTSSQSVQHENTYRDPIAKYCYGEYPPELLPV.

Residues 1 to 16 (MVPCGAVLWRRLLRKR) lie on the Cytoplasmic side of the membrane. The chain crosses the membrane as a helical span at residues 17–35 (WVLGVVFGLSLVYFLSSTF). At 36–205 (KQEERTVRDR…GEYPPELLPV (170 aa)) the chain is on the lumenal side. N-linked (GlcNAc...) asparagine glycosylation occurs at Asn-67.

Belongs to the SPRING family.

Its subcellular location is the golgi apparatus membrane. Positively regulates hepatic SREBP signaling pathway by modulating the proper localization of SCAP (SREBP cleavage-activating protein) to the endoplasmic reticulum, thereby controlling the level of functional SCAP. The protein is SREBP regulating gene protein of Gallus gallus (Chicken).